The sequence spans 179 residues: DELTA-actitoxin-Afr1a (179 aa).

An N-terminal alpha-helix that contributes to the pore region spans residues 1–29 (SADVAGAVIDGAGLGFDVLKTVLEALGNV). Arginine 31 contacts an N-(acyl)-sphingosylphosphocholine. N-acetyl-D-glucosamine 6-sulfate contacts are provided by tyrosine 51 and arginine 53. Arginine 53, serine 54, arginine 79, glycine 85, tyrosine 108, tyrosine 113, serine 114, tryptophan 116, tyrosine 133, tyrosine 137, tyrosine 138, arginine 144, and glycine 168 together coordinate an N-(acyl)-sphingosylphosphocholine. The segment at 105 to 120 (SVPYDYNWYSNWWNVR) is trp-rich region, which is important for the binding to lipid membrane. N-acetyl-D-glucosamine 6-sulfate is bound at residue tyrosine 138. The Cell attachment site, crucial for protein stability signature appears at 144-146 (RGD).

This sequence belongs to the actinoporin family. Sea anemone subfamily. Octamer or nonamer in membranes. Monomer in the soluble state.

The protein localises to the secreted. The protein resides in the nematocyst. Its subcellular location is the target cell membrane. Its function is as follows. Pore-forming toxin (PFT) that consists of a crown-shaped octamer or nonamer that forms cation-selective hydrophilic pores of about 1.5 nm (inside) and 13 nm (outside). It causes cardiac stimulation and cytolysis (EC(50)=1.6 nM on erythrocytes). Interestingly, the Phe-16 is crucial for hemolysis. Pore formation is a multi-step process that involves specific recognition of membrane sphingomyelin (but neither cholesterol nor phosphatidylcholine) using aromatic rich region and adjacent phosphocholine (POC) binding site, firm binding to the membrane (mainly driven by hydrophobic interactions) accompanied by the transfer of the N-terminal region to the lipid-water interface and finally pore formation after oligomerization of monomers. It is probable that a dimeric form is an assembly intermediate before the complete oligomerization. The formation of stable pores occurs only in vesicles composed of DOPC/SM (there is no oligomerization when the PFT is treated with vesicles of DOPC or SM alone). The transmembrane pore displays 8 lateral perforations, one at each subunit-subunit interface, partially occupied by the acyl-chain region of a bridging lipid. Each pore contains 24 lipid molecules, firmly bound to each subunit, that is, 3 lipids (L1, L2, L3, L4 and/or L5) are associated to each subunit. Lipid L1 bridges 2 subunits, whereas lipids L2 and L3 bind to sites at single subunit. The sequence is that of DELTA-actitoxin-Afr1a from Actinia fragacea (Strawberry anemone).